We begin with the raw amino-acid sequence, 271 residues long: NH(3)-dependent NAD(+) synthetase (271 aa).

43–50 is an ATP binding site; it reads GISGGQDS. Residue D49 coordinates Mg(2+). R136 lines the deamido-NAD(+) pocket. T156 is an ATP binding site. E161 lines the Mg(2+) pocket. Residues K169 and D176 each coordinate deamido-NAD(+). Positions 185 and 207 each coordinate ATP. 256–257 provides a ligand contact to deamido-NAD(+); that stretch reads HK.

It belongs to the NAD synthetase family. Homodimer.

It catalyses the reaction deamido-NAD(+) + NH4(+) + ATP = AMP + diphosphate + NAD(+) + H(+). Its pathway is cofactor biosynthesis; NAD(+) biosynthesis; NAD(+) from deamido-NAD(+) (ammonia route): step 1/1. In terms of biological role, catalyzes the ATP-dependent amidation of deamido-NAD to form NAD. Uses ammonia as a nitrogen source. The sequence is that of NH(3)-dependent NAD(+) synthetase from Tropheryma whipplei (strain TW08/27) (Whipple's bacillus).